The following is a 131-amino-acid chain: Mediator of RNA polymerase II transcription subunit 31 (131 aa).

Ala2 is subject to N-acetylalanine.

The protein belongs to the Mediator complex subunit 31 family. As to quaternary structure, component of the Mediator complex, which is composed of MED1, MED4, MED6, MED7, MED8, MED9, MED10, MED11, MED12, MED13, MED13L, MED14, MED15, MED16, MED17, MED18, MED19, MED20, MED21, MED22, MED23, MED24, MED25, MED26, MED27, MED29, MED30, MED31, CCNC, CDK8 and CDC2L6/CDK11. The MED12, MED13, CCNC and CDK8 subunits form a distinct module termed the CDK8 module. Mediator containing the CDK8 module is less active than Mediator lacking this module in supporting transcriptional activation. Individual preparations of the Mediator complex lacking one or more distinct subunits have been variously termed ARC, CRSP, DRIP, PC2, SMCC and TRAP.

It is found in the nucleus. Functionally, component of the Mediator complex, a coactivator involved in the regulated transcription of nearly all RNA polymerase II-dependent genes. Mediator functions as a bridge to convey information from gene-specific regulatory proteins to the basal RNA polymerase II transcription machinery. Mediator is recruited to promoters by direct interactions with regulatory proteins and serves as a scaffold for the assembly of a functional preinitiation complex with RNA polymerase II and the general transcription factors. This Mus musculus (Mouse) protein is Mediator of RNA polymerase II transcription subunit 31 (Med31).